An 80-amino-acid polypeptide reads, in one-letter code: Progonadoliberin-1 (80 aa).

The first 21 residues, 1–21 (MGIKRALWWMVVCVVVLQVSA), serve as a signal peptide directing secretion. Residue Gln-22 is modified to Pyrrolidone carboxylic acid. Gly-31 bears the Glycine amide mark.

It belongs to the GnRH family.

The protein localises to the secreted. Functionally, stimulates the secretion of gonadotropins. The protein is Progonadoliberin-1 (gnrh1) of Clarias gariepinus (North African catfish).